Consider the following 1069-residue polypeptide: Protocadherin-7 (1069 aa).

A signal peptide spans 1–28 (MLRMRTAGWARGWCLGCCLLLPLSLSLA). Cadherin domains are found at residues 29–143 (AAKQ…TPTF), 144–308 (PSPV…SPRF), 309–415 (EKSV…VPSI), 424–535 (PLKD…PPMF), 536–639 (GQSV…DPKF), 640–742 (MQDV…APTV), and 745–862 (PKNI…IPLT). At 29–879 (AAKQLLRYRL…SYEISKQRLS (851 aa)) the chain is on the extracellular side. Residue N79 is glycosylated (N-linked (GlcNAc...) asparagine). Positions 182 to 242 (LLQEPGGGGS…GGTNPGGRSS (61 aa)) are disordered. A compositionally biased stretch (gly residues) spans 207 to 221 (PGGGGNGASGGGSGG). Residues N689, N747, N780, N822, N840, and N845 are each glycosylated (N-linked (GlcNAc...) asparagine). Residues 880–900 (IVIGVVAGIMTVILIILIVVM) traverse the membrane as a helical segment. At 901–1069 (ARYCRSKNKN…RLHPYITVFG (169 aa)) the chain is on the cytoplasmic side. A disordered region spans residues 910-988 (NGYEAGKKDH…RYRSVNGGPG (79 aa)). Residues 930-944 (KSKKPKKDKKNKKSK) show a composition bias toward basic residues. 2 positions are modified to phosphoserine: S989 and S1011.

As to expression, expressed predominantly in brain and heart and at lower levels in various other tissues.

Its subcellular location is the cell membrane. This chain is Protocadherin-7 (PCDH7), found in Homo sapiens (Human).